Reading from the N-terminus, the 212-residue chain is MRVSSRKGESLAHLLKQEGIVNASVLNAVACTPRELFLPDALRHKAYQNTALPIGQGQTISQPYIVAKMTELLLASSNAPKAVLEIGTGSGYQTAILAQLFDKVFSVERIKSLQFQAKRRMNQLDLHNVSMKHGDGWQGWSSKGPFDAIIVTAAASQVPAKLVEQLNDGGRLIIPVGEQSQQLHCITRVGEGFNEQIIEAVRFVPLVAGDII.

Ser-61 is an active-site residue.

It belongs to the methyltransferase superfamily. L-isoaspartyl/D-aspartyl protein methyltransferase family.

The protein localises to the cytoplasm. It catalyses the reaction [protein]-L-isoaspartate + S-adenosyl-L-methionine = [protein]-L-isoaspartate alpha-methyl ester + S-adenosyl-L-homocysteine. Catalyzes the methyl esterification of L-isoaspartyl residues in peptides and proteins that result from spontaneous decomposition of normal L-aspartyl and L-asparaginyl residues. It plays a role in the repair and/or degradation of damaged proteins. This chain is Protein-L-isoaspartate O-methyltransferase, found in Pseudoalteromonas atlantica (strain T6c / ATCC BAA-1087).